A 349-amino-acid polypeptide reads, in one-letter code: Soluble TNF receptor II (349 aa).

Residues 1–19 (MRSVLYSYILFLSCIIING) form the signal peptide. 2 TNFR-Cys repeats span residues 31 to 65 (KCKD…NTQC) and 67 to 108 (PCGS…NRIC). Intrachain disulfides connect cysteine 32-cysteine 43, cysteine 44-cysteine 57, cysteine 47-cysteine 65, cysteine 68-cysteine 83, cysteine 86-cysteine 100, and cysteine 90-cysteine 108. N-linked (GlcNAc...) asparagine; by host glycans are attached at residues asparagine 101, asparagine 190, asparagine 249, asparagine 277, and asparagine 313.

The protein belongs to the orthopoxvirus OPG002 family.

Its subcellular location is the secreted. Functionally, inhibits host immune defense by binding to host TNF and various chemokines in the extracellular space. Binds host CC chemokines (beta chemokines) and CXC chemokines (alpha chemokines). This chain is Soluble TNF receptor II (OPG002), found in Monkeypox virus.